Reading from the N-terminus, the 88-residue chain is Small ribosomal subunit protein bS20 (88 aa).

Positions 1–28 (MANIKSQIKRNRQNEKRRLRNKSVKSSL) are disordered. Residues 7-23 (QIKRNRQNEKRRLRNKS) are compositionally biased toward basic residues.

The protein belongs to the bacterial ribosomal protein bS20 family.

Functionally, binds directly to 16S ribosomal RNA. The polypeptide is Small ribosomal subunit protein bS20 (Salinispora tropica (strain ATCC BAA-916 / DSM 44818 / JCM 13857 / NBRC 105044 / CNB-440)).